Consider the following 433-residue polypeptide: Eukaryotic translation initiation factor 3 subunit E (433 aa).

In terms of domain architecture, PCI spans 217–390; sequence FFNHGKGRDL…GHVVMGTQPL (174 aa).

The protein belongs to the eIF-3 subunit E family. As to quaternary structure, component of the eukaryotic translation initiation factor 3 (eIF-3) complex.

Its subcellular location is the cytoplasm. Its function is as follows. Component of the eukaryotic translation initiation factor 3 (eIF-3) complex, which is involved in protein synthesis of a specialized repertoire of mRNAs and, together with other initiation factors, stimulates binding of mRNA and methionyl-tRNAi to the 40S ribosome. The eIF-3 complex specifically targets and initiates translation of a subset of mRNAs involved in cell proliferation. This Anopheles gambiae (African malaria mosquito) protein is Eukaryotic translation initiation factor 3 subunit E (eIF3-S6).